The following is a 130-amino-acid chain: Ribonuclease VapC4 (130 aa).

The region spanning 7 to 130 (LADTSVFIGI…AMPDVEVITI (124 aa)) is the PINc domain. Positions 9 and 98 each coordinate Mg(2+).

It belongs to the PINc/VapC protein family. As to quaternary structure, interacts with cognate antitoxin VapB4. Requires Mg(2+) as cofactor.

The protein localises to the secreted. Its function is as follows. Toxic component of a type II toxin-antitoxin (TA) system. Probably exerts its toxic effect by binding to mRNA, inhibiting translation. Binds to, recognizes and cleaves ssRNA at ACGC and AC(A/U)GC sequences, usually between the G and C; cleavage is not very efficient, nor is cleavage required to inhibit protein synthesis. Upon expression in situ, in M.smegmatis or E.coli inhibits cell growth and colony formation; in at least E.coli also causes increased levels of cellular RNA. Its toxic effect is neutralized by coexpression with cognate antitoxin VapB4. The polypeptide is Ribonuclease VapC4 (Mycobacterium tuberculosis (strain ATCC 25618 / H37Rv)).